The primary structure comprises 94 residues: Co-chaperonin GroES (94 aa).

It belongs to the GroES chaperonin family. As to quaternary structure, heptamer of 7 subunits arranged in a ring. Interacts with the chaperonin GroEL.

Its subcellular location is the cytoplasm. Functionally, together with the chaperonin GroEL, plays an essential role in assisting protein folding. The GroEL-GroES system forms a nano-cage that allows encapsulation of the non-native substrate proteins and provides a physical environment optimized to promote and accelerate protein folding. GroES binds to the apical surface of the GroEL ring, thereby capping the opening of the GroEL channel. In Lactococcus lactis subsp. lactis (strain IL1403) (Streptococcus lactis), this protein is Co-chaperonin GroES.